The primary structure comprises 257 residues: Small ribosomal subunit protein uS15m (257 aa).

The transit peptide at 1-57 directs the protein to the mitochondrion; that stretch reads MLRAAWRALSSVRVQAVTQAPVPALRARSSASLPSARCGLQTPSLLNAARAYAVQKP. Positions 228 to 257 are disordered; it reads KAAAAAAKKEKRERVPENPSNALPEKTKEN. Residues 234-243 are compositionally biased toward basic and acidic residues; that stretch reads AKKEKRERVP.

It belongs to the universal ribosomal protein uS15 family. As to quaternary structure, component of the mitochondrial ribosome small subunit (28S) which comprises a 12S rRNA and about 30 distinct proteins. Interacts with METTL17.

Its subcellular location is the mitochondrion matrix. The protein is Small ribosomal subunit protein uS15m (Mrps15) of Rattus norvegicus (Rat).